The primary structure comprises 239 residues: Lactate utilization protein A (239 aa).

It belongs to the LutA/YkgE family.

Functionally, is involved in L-lactate degradation and allows cells to grow with lactate as the sole carbon source. This is Lactate utilization protein A from Geobacillus kaustophilus (strain HTA426).